The chain runs to 518 residues: Glutamate--cysteine ligase (518 aa).

Belongs to the glutamate--cysteine ligase type 1 family. Type 1 subfamily.

The enzyme catalyses L-cysteine + L-glutamate + ATP = gamma-L-glutamyl-L-cysteine + ADP + phosphate + H(+). Its pathway is sulfur metabolism; glutathione biosynthesis; glutathione from L-cysteine and L-glutamate: step 1/2. The polypeptide is Glutamate--cysteine ligase (Citrobacter koseri (strain ATCC BAA-895 / CDC 4225-83 / SGSC4696)).